Consider the following 350-residue polypeptide: Patr class I histocompatibility antigen, alpha chain E (350 aa).

A signal peptide spans 1–21; the sequence is MVDGTLLLLLSEALALTQTWA. The segment at 22-111 is alpha-1; that stretch reads GSHSLKYFHT…LRGYYNQSEA (90 aa). The Extracellular portion of the chain corresponds to 22–305; sequence GSHSLKYFHT…KPASQPTIPI (284 aa). An N-linked (GlcNAc...) asparagine glycan is attached at asparagine 107. An alpha-2 region spans residues 112 to 203; the sequence is GSHTLQWMHG…EKGKETLLHL (92 aa). 2 disulfides stabilise this stretch: cysteine 122–cysteine 185 and cysteine 224–cysteine 280. The interval 204–295 is alpha-3; that stretch reads EPPKTHVTHH…GLPEPLTLRW (92 aa). The 89-residue stretch at 206 to 294 folds into the Ig-like C1-type domain; that stretch reads PKTHVTHHPI…EGLPEPLTLR (89 aa). Residues 296-305 form a connecting peptide region; that stretch reads KPASQPTIPI. The helical transmembrane segment at 306 to 329 threads the bilayer; the sequence is VGIIAGLVLLGSVVSGAVVAAVMW. Residues 330 to 350 lie on the Cytoplasmic side of the membrane; it reads RKKSSGGKGRSYSKAEWSDSA.

It belongs to the MHC class I family. Heterodimer of an alpha chain and a beta chain (beta-2-microglobulin).

It localises to the membrane. Preferably binds to a peptide derived from the signal sequence of most HLA-A, -B, -C and -G molecules. The sequence is that of Patr class I histocompatibility antigen, alpha chain E (Patr-E) from Pan troglodytes (Chimpanzee).